Consider the following 450-residue polypeptide: Phosphoglucosamine mutase (450 aa).

Catalysis depends on Ser-101, which acts as the Phosphoserine intermediate. Mg(2+)-binding residues include Ser-101, Asp-240, Asp-242, and Asp-244. Ser-101 is subject to Phosphoserine.

It belongs to the phosphohexose mutase family. Requires Mg(2+) as cofactor. Post-translationally, activated by phosphorylation.

The enzyme catalyses alpha-D-glucosamine 1-phosphate = D-glucosamine 6-phosphate. Catalyzes the conversion of glucosamine-6-phosphate to glucosamine-1-phosphate. This chain is Phosphoglucosamine mutase, found in Streptococcus thermophilus (strain CNRZ 1066).